A 128-amino-acid polypeptide reads, in one-letter code: Small ribosomal subunit protein eS8 (128 aa).

Belongs to the eukaryotic ribosomal protein eS8 family. In terms of assembly, part of the 30S ribosomal subunit.

The polypeptide is Small ribosomal subunit protein eS8 (Methanococcus vannielii (strain ATCC 35089 / DSM 1224 / JCM 13029 / OCM 148 / SB)).